The chain runs to 359 residues: Dual-specificity RNA methyltransferase RlmN (359 aa).

The Proton acceptor role is filled by Glu-102. The 244-residue stretch at 108–351 (EKKRATLCIS…IRKNRGSDIQ (244 aa)) folds into the Radical SAM core domain. An intrachain disulfide couples Cys-115 to Cys-354. Residues Cys-122, Cys-126, and Cys-129 each contribute to the [4Fe-4S] cluster site. Residues 178-179 (GE), Ser-210, 232-234 (SLH), and Asn-311 each bind S-adenosyl-L-methionine. The S-methylcysteine intermediate role is filled by Cys-354.

This sequence belongs to the radical SAM superfamily. RlmN family. [4Fe-4S] cluster serves as cofactor.

Its subcellular location is the cytoplasm. The enzyme catalyses adenosine(2503) in 23S rRNA + 2 reduced [2Fe-2S]-[ferredoxin] + 2 S-adenosyl-L-methionine = 2-methyladenosine(2503) in 23S rRNA + 5'-deoxyadenosine + L-methionine + 2 oxidized [2Fe-2S]-[ferredoxin] + S-adenosyl-L-homocysteine. It catalyses the reaction adenosine(37) in tRNA + 2 reduced [2Fe-2S]-[ferredoxin] + 2 S-adenosyl-L-methionine = 2-methyladenosine(37) in tRNA + 5'-deoxyadenosine + L-methionine + 2 oxidized [2Fe-2S]-[ferredoxin] + S-adenosyl-L-homocysteine. Its function is as follows. Specifically methylates position 2 of adenine 2503 in 23S rRNA and position 2 of adenine 37 in tRNAs. m2A2503 modification seems to play a crucial role in the proofreading step occurring at the peptidyl transferase center and thus would serve to optimize ribosomal fidelity. In Buchnera aphidicola subsp. Cinara cedri (strain Cc), this protein is Dual-specificity RNA methyltransferase RlmN.